The primary structure comprises 98 residues: Protein PROLINE CONTENT ALTERNATIVE 22 (98 aa).

Mainly expressed in flowers, to a lower extent, in roots and, at very low levels, in leaves and stems.

The protein localises to the cytoplasm. Functionally, acts as an opponent to RZF1 during early seedling growth in term of proline accumulation in response to dehydration and abscisic acid (ABA). Confers sensitivity to abiotic stresses such as ABA, drought and osmotic stress (e.g. mannitol treatment) by preventing proline accumulation and by reducing the expression of dehydration-inducible genes. Promotes the production of lipid peroxidation by drought stress thus leading to malondialdehyde (MDA) synthesis. Prevents pollen tube elongation. Necessary for RZF1 expression in seedlings. The protein is Protein PROLINE CONTENT ALTERNATIVE 22 of Arabidopsis thaliana (Mouse-ear cress).